A 340-amino-acid polypeptide reads, in one-letter code: DNA-directed RNA polymerase subunit alpha (340 aa).

An alpha N-terminal domain (alpha-NTD) region spans residues 1-236 (MLSLSKNWNT…EQLQLFISFE (236 aa)). Positions 251–340 (FSPYLLKRVD…LSKRYEDSYN (90 aa)) are alpha C-terminal domain (alpha-CTD).

It belongs to the RNA polymerase alpha chain family. In terms of assembly, homodimer. The RNAP catalytic core consists of 2 alpha, 1 beta, 1 beta' and 1 omega subunit. When a sigma factor is associated with the core the holoenzyme is formed, which can initiate transcription.

It catalyses the reaction RNA(n) + a ribonucleoside 5'-triphosphate = RNA(n+1) + diphosphate. DNA-dependent RNA polymerase catalyzes the transcription of DNA into RNA using the four ribonucleoside triphosphates as substrates. This is DNA-directed RNA polymerase subunit alpha from Rickettsia conorii (strain ATCC VR-613 / Malish 7).